The primary structure comprises 115 residues: Nucleoid-associated protein LBL_0065 (115 aa).

This sequence belongs to the YbaB/EbfC family. Homodimer.

The protein resides in the cytoplasm. It localises to the nucleoid. Its function is as follows. Binds to DNA and alters its conformation. May be involved in regulation of gene expression, nucleoid organization and DNA protection. The chain is Nucleoid-associated protein LBL_0065 from Leptospira borgpetersenii serovar Hardjo-bovis (strain L550).